A 276-amino-acid polypeptide reads, in one-letter code: L-aminoadipate-semialdehyde dehydrogenase-phosphopantetheinyl transferase (276 aa).

This sequence belongs to the P-Pant transferase superfamily. AcpS family.

It carries out the reaction apo-[ACP] + CoA = holo-[ACP] + adenosine 3',5'-bisphosphate + H(+). Its function is as follows. Catalyzes the transfer of a 4'-phosphopantetheine moiety from coenzyme A to a serine residue of acceptor proteins, such as alpha-aminoadipate reductase. Necessary for alpha-aminoadipate reductase activity. This chain is L-aminoadipate-semialdehyde dehydrogenase-phosphopantetheinyl transferase (LYS5), found in Eremothecium gossypii (strain ATCC 10895 / CBS 109.51 / FGSC 9923 / NRRL Y-1056) (Yeast).